The following is a 157-amino-acid chain: Transcriptional repressor NrdR (157 aa).

A zinc finger spans residues 3–34 (CPFCRHPDSRVIDSRTSDDGLSIRRRRQCPEC). An ATP-cone domain is found at 46–136 (LSVIKRSGVV…VYQAFDSLED (91 aa)).

It belongs to the NrdR family. Zn(2+) serves as cofactor.

Its function is as follows. Negatively regulates transcription of bacterial ribonucleotide reductase nrd genes and operons by binding to NrdR-boxes. This is Transcriptional repressor NrdR from Leifsonia xyli subsp. xyli (strain CTCB07).